The primary structure comprises 388 residues: Succinate--CoA ligase [ADP-forming] subunit beta (388 aa).

One can recognise an ATP-grasp domain in the interval lysine 9–glutamine 244. ATP is bound by residues lysine 46, glycine 53–glycine 55, glutamate 99, threonine 102, and glutamate 107. 2 residues coordinate Mg(2+): asparagine 199 and aspartate 213. Substrate contacts are provided by residues asparagine 264 and glycine 321–valine 323.

Belongs to the succinate/malate CoA ligase beta subunit family. Heterotetramer of two alpha and two beta subunits. It depends on Mg(2+) as a cofactor.

The catalysed reaction is succinate + ATP + CoA = succinyl-CoA + ADP + phosphate. It carries out the reaction GTP + succinate + CoA = succinyl-CoA + GDP + phosphate. It functions in the pathway carbohydrate metabolism; tricarboxylic acid cycle; succinate from succinyl-CoA (ligase route): step 1/1. Succinyl-CoA synthetase functions in the citric acid cycle (TCA), coupling the hydrolysis of succinyl-CoA to the synthesis of either ATP or GTP and thus represents the only step of substrate-level phosphorylation in the TCA. The beta subunit provides nucleotide specificity of the enzyme and binds the substrate succinate, while the binding sites for coenzyme A and phosphate are found in the alpha subunit. The sequence is that of Succinate--CoA ligase [ADP-forming] subunit beta from Escherichia coli O139:H28 (strain E24377A / ETEC).